Here is a 245-residue protein sequence, read N- to C-terminus: MAGHSQYANIKHRKNAQDAKRARKFTKLRREILVAARSGLPDPEFNPRLRSALANARRFGLPKDKIESAIKSSTDKTEGDYQEVCYMAASSGGMWPSGFAVVVTALTDNKNRTASNVKHILSKSGLVLADVSFMFESFGVFSYPKSTDFDKLMEVALEASALDIKTEKNHFDVYCSRESFAATSLELRKKLGEYEHSGLVWRAKTHQEVPPEVHVRLEKLVDALEEDDDVQRVYTSILTERQSEK.

Residues 1–22 (MAGHSQYANIKHRKNAQDAKRA) are disordered.

The protein belongs to the TACO1 family.

The protein resides in the cytoplasm. This Neorickettsia sennetsu (strain ATCC VR-367 / Miyayama) (Ehrlichia sennetsu) protein is Probable transcriptional regulatory protein NSE_0641.